Reading from the N-terminus, the 251-residue chain is Squamosa promoter-binding-like protein 4 (251 aa).

The span at 1–15 (MDWMPPPKPTSPRSP) shows a compositional bias: pro residues. The tract at residues 1-64 (MDWMPPPKPT…RAEEGGGGGG (64 aa)) is disordered. A compositionally biased stretch (low complexity) spans 24 to 43 (AAVPGSSSGEVSAAAAAAAA). Residues 65–142 (EVRCQVEGCG…YDHNARRRKP (78 aa)) form an SBP-type zinc finger. The Zn(2+) site is built by Cys68, Cys73, Cys90, His93, Cys109, Cys112, His116, and Cys128. Residues 125 to 141 (KRSCRRRLYDHNARRRK) carry the Bipartite nuclear localization signal motif.

In terms of tissue distribution, expressed in stems, leaf sheaths, and young panicles.

It localises to the nucleus. Functionally, trans-acting factor that binds specifically to the consensus nucleotide sequence 5'-TNCGTACAA-3'. May be involved in panicle development. This Oryza sativa subsp. japonica (Rice) protein is Squamosa promoter-binding-like protein 4 (SPL4).